A 133-amino-acid polypeptide reads, in one-letter code: Core atranone cluster (CAC) protein 11 (133 aa).

It participates in mycotoxin biosynthesis. Its function is as follows. Part of the core atranone cluster (CAC) which products are predicted to catalyze most or all steps of mycotoxin atranone synthesis, starting from geranylgeranyl pyrophosphate (GGPP). The initial cyclization of GGPP to dolabellane is probably performed by the terpene cyclase ATR13. The Baeyer-Villiger oxidation near the end of the atranone synthesis, which converts atranones D and E to atranones F and G is predicted to be catalyzed by the monooxygenase ATR8. Of the CAC's other predicted gene products, the reducing PKS ATR6 might synthesize a polyketide chain. This polyketide is probably transferred onto the atranone backbone by the polyketide transferase ATR5. Other predicted CAC products include 4 oxygenases (ATR2, ATR3, ATR4, and ATR14), 3 short-chain reductases (ATR7, ATR9, and ATR10), and a methyltransferase (ATR12). These may all be involved in the various steps of atranone biosynthesis, although their specific roles must await experimental determination. The protein is Core atranone cluster (CAC) protein 11 of Stachybotrys chlorohalonatus (strain IBT 40285).